A 139-amino-acid chain; its full sequence is Plastocyanin (139 aa).

Residues 1-34 (MKLISASLRRFSLAVLTILLVVSSFAVFTPSASA) form the signal peptide. The 105-residue stretch at 35 to 139 (ETYQVKLGTD…GMVGTITVQG (105 aa)) folds into the Plastocyanin-like domain. The Cu cation site is built by H73, C123, H126, and M131.

It belongs to the plastocyanin family. The cofactor is Cu(2+).

The protein localises to the cellular thylakoid membrane. Participates in electron transfer between P700 and the cytochrome b6-f complex in photosystem I. The sequence is that of Plastocyanin from Nostoc punctiforme (strain ATCC 29133 / PCC 73102).